The following is a 663-amino-acid chain: UvrABC system protein B (663 aa).

Residues 30–417 (EGIKAGKRHQ…TDKMVEQIIR (388 aa)) form the Helicase ATP-binding domain. 43–50 (GATGTGKT) is an ATP binding site. Positions 96–119 (YYDYYQPEAYVPSTDTFIEKDASI) match the Beta-hairpin motif. One can recognise a Helicase C-terminal domain in the interval 434–600 (QIDDLLSEIQ…TINKKIHDLI (167 aa)). One can recognise a UVR domain in the interval 627–662 (QKTIDNIEKEMKQAAKDLDFEKATELRDMLFELKAE).

Belongs to the UvrB family. As to quaternary structure, forms a heterotetramer with UvrA during the search for lesions. Interacts with UvrC in an incision complex.

It is found in the cytoplasm. In terms of biological role, the UvrABC repair system catalyzes the recognition and processing of DNA lesions. A damage recognition complex composed of 2 UvrA and 2 UvrB subunits scans DNA for abnormalities. Upon binding of the UvrA(2)B(2) complex to a putative damaged site, the DNA wraps around one UvrB monomer. DNA wrap is dependent on ATP binding by UvrB and probably causes local melting of the DNA helix, facilitating insertion of UvrB beta-hairpin between the DNA strands. Then UvrB probes one DNA strand for the presence of a lesion. If a lesion is found the UvrA subunits dissociate and the UvrB-DNA preincision complex is formed. This complex is subsequently bound by UvrC and the second UvrB is released. If no lesion is found, the DNA wraps around the other UvrB subunit that will check the other stand for damage. The polypeptide is UvrABC system protein B (Staphylococcus aureus (strain COL)).